Here is a 286-residue protein sequence, read N- to C-terminus: uncharacterized protein (286 aa).

2 helical membrane passes run 201 to 221 (VIYS…LCET) and 231 to 251 (AIIL…YLMM).

Its subcellular location is the cell membrane. This is an uncharacterized protein from Methanocaldococcus jannaschii (strain ATCC 43067 / DSM 2661 / JAL-1 / JCM 10045 / NBRC 100440) (Methanococcus jannaschii).